Here is a 491-residue protein sequence, read N- to C-terminus: 3-epi-6-deoxocathasterone 23-monooxygenase CYP90D1 (491 aa).

The chain crosses the membrane as a helical span at residues 7 to 27; the sequence is LLFFSFFFFIIIVIFNKINGL. Residue Cys442 participates in heme binding.

Belongs to the cytochrome P450 family. It depends on heme as a cofactor. As to expression, expressed in leaf vascular tissue.

Its subcellular location is the endoplasmic reticulum membrane. The catalysed reaction is 3-epi-6-deoxocathasterone + reduced [NADPH--hemoprotein reductase] + O2 = 6-deoxotyphasterol + oxidized [NADPH--hemoprotein reductase] + H2O + H(+). It catalyses the reaction (22S,24R)-22-hydroxy-5alpha-ergostan-3-one + reduced [NADPH--hemoprotein reductase] + O2 = 3-dehydro-6-deoxoteasterone + oxidized [NADPH--hemoprotein reductase] + H2O + H(+). It participates in plant hormone biosynthesis; brassinosteroid biosynthesis. In terms of biological role, involved in brassinosteroid (BR) biosynthesis. May convert teasterone (TE) to 3-dehydroteasterone (3DT, 3-DHT), or 6-deoxoteasterone (6-deoxoTE) to 3-dehydro-6-deoxoteasterone (6-deoxo3DT, 6-deoxo3DHT). C-23 hydroxylase that converts directly (22S,24R)-22-hydroxy-5-alpha-ergostan-3-one and 3-epi-6-deoxocathasterone to 3-dehydro-6-deoxoteasterone (6-deoxo3DT, 6-deoxo3DHT) and 6-deoxotyphasterol (6-deoxoTY), respectively. These C-23 hydroxylation shortcuts bypass campestanol, 6-deoxocathasterone, and 6-deoxoteasterone (6-deoxoTE). Also catalyzes the conversion of cathasterone to teasterone (TE), 6-deoxotyphasterol (6-deoxoTY) to 6-deoxocathasterone (6-deoxoCT), (22S,24R)-22-hydroxyergost-4-en-3-one (22-OH-4-en-3-one) to (22R,23R)-22,23-dihydroxy-campest-4-en-3-one (22,23-diOH-4-en-3-one) and (22S)-22-hydroxycampesterol (22-OHCR) to (22R,23R)-22,23-dihydroxycampesterol (22,23-diOHCR). This chain is 3-epi-6-deoxocathasterone 23-monooxygenase CYP90D1, found in Arabidopsis thaliana (Mouse-ear cress).